Here is a 209-residue protein sequence, read N- to C-terminus: MAKNFYDITLALAGICQSARLVQSLAHEGTCDSEALHVSLKSVIDQNPASTLDVFGGREAGLKIGLETLLGMLNTSSRQGLGAELTRYTLSLMVLERKLAASKGAMNTLGNRIADLSRQLEHFELESDTLMSAMAGIYVDVISPLGPRIQVNGSPNVLQSPQIQAKVRATLLAGIRAAVLWQQVGGGRLQLMFSRNRLTTQAKQILAQC.

Residues 95-132 are a coiled coil; the sequence is LERKLAASKGAMNTLGNRIADLSRQLEHFELESDTLMS.

Belongs to the HflD family.

Its subcellular location is the cytoplasm. It is found in the cell inner membrane. The chain is High frequency lysogenization protein HflD homolog from Cronobacter sakazakii (strain ATCC BAA-894) (Enterobacter sakazakii).